The chain runs to 65 residues: U11-theraphotoxin-Cg1a (65 aa).

The signal sequence occupies residues 1-21; the sequence is MKTTILLVILGLTLLFALSAA. A propeptide spanning residues 22 to 29 is cleaved from the precursor; that stretch reads TELKDEER. Cystine bridges form between Cys31-Cys45, Cys38-Cys50, and Cys44-Cys57.

Belongs to the neurotoxin 10 (Hwtx-1) family. 32 (Jztx-16) subfamily. In terms of tissue distribution, expressed by the venom gland.

The protein localises to the secreted. Probable ion channel inhibitor. The chain is U11-theraphotoxin-Cg1a from Chilobrachys guangxiensis (Chinese earth tiger tarantula).